We begin with the raw amino-acid sequence, 351 residues long: Peptide chain release factor 1 (351 aa).

Gln229 carries the N5-methylglutamine modification.

It belongs to the prokaryotic/mitochondrial release factor family. Methylated by PrmC. Methylation increases the termination efficiency of RF1.

It is found in the cytoplasm. In terms of biological role, peptide chain release factor 1 directs the termination of translation in response to the peptide chain termination codons UAG and UAA. This Cereibacter sphaeroides (strain ATCC 17023 / DSM 158 / JCM 6121 / CCUG 31486 / LMG 2827 / NBRC 12203 / NCIMB 8253 / ATH 2.4.1.) (Rhodobacter sphaeroides) protein is Peptide chain release factor 1.